The sequence spans 170 residues: Acetolactate synthase small subunit (170 aa).

One can recognise an ACT domain in the interval T9–E83. An Isoglutamyl lysine isopeptide (Lys-Gln) (interchain with Q-Cter in protein Pup) cross-link involves residue K46.

The protein belongs to the acetolactate synthase small subunit family. Dimer of large and small chains.

The enzyme catalyses 2 pyruvate + H(+) = (2S)-2-acetolactate + CO2. It participates in amino-acid biosynthesis; L-isoleucine biosynthesis; L-isoleucine from 2-oxobutanoate: step 1/4. The protein operates within amino-acid biosynthesis; L-valine biosynthesis; L-valine from pyruvate: step 1/4. In Mycolicibacterium smegmatis (strain ATCC 700084 / mc(2)155) (Mycobacterium smegmatis), this protein is Acetolactate synthase small subunit (ilvH).